Here is a 467-residue protein sequence, read N- to C-terminus: MKHIVKHIHFVGIGGVGMSGIAEVLVNLGYQVSGSDLTSNAITDRLAALGARIAIGHAAENIEGANAVVVSTAVRSDNPEVLAARHRRIPIVPRAVMLAELMRLKQGIAIAGTHGKTTTTSLVASVLAAGGLDPTFVIGGRLISAGANARLGTGDFIVAEADESDASFLNLFPVIEVITNIDADHMDTYGHDFARLKQAFIEFTHRLPFYGIAVLCVDDPNVKEILPFVSKPIIRYGFAPDAQVRAVNVKAHDGKMHFTAMREDAAPIDIVLNLPGEHNVQNALAAIAIATELEVKDADIQRALADFNGVGRRFQRYGEVPVVSEGKASGAYTLVDDYGHHPVEMAATVAAARGAFPGRRLVLAFQPHRFTRTRDCFEDFVKVLSTVDALVLTEVYSAGESPIVAADGRALARALRVAGKVEPVFVDTVDEVPDALSAVVRDGDVVITMGAGSIGGVPGRLAQETKV.

Residue 112-118 (GTHGKTT) coordinates ATP.

Belongs to the MurCDEF family.

It is found in the cytoplasm. The enzyme catalyses UDP-N-acetyl-alpha-D-muramate + L-alanine + ATP = UDP-N-acetyl-alpha-D-muramoyl-L-alanine + ADP + phosphate + H(+). It functions in the pathway cell wall biogenesis; peptidoglycan biosynthesis. Functionally, cell wall formation. This Paraburkholderia phytofirmans (strain DSM 17436 / LMG 22146 / PsJN) (Burkholderia phytofirmans) protein is UDP-N-acetylmuramate--L-alanine ligase.